The primary structure comprises 457 residues: Interferon regulatory factor 7 (457 aa).

Positions 9-126 (RVLFGDWLLG…DPHKVYELSR (118 aa)) form a DNA-binding region, IRF tryptophan pentad repeat. Lysine 92 carries the N6-acetyllysine; by KAT2A and KAT2B modification. The tract at residues 238–410 (RSLGFLDVTI…TLILVKLEPW (173 aa)) is necessary for the interaction with NMI. Residue lysine 329 forms a Glycyl lysine isopeptide (Lys-Gly) (interchain with G-Cter in ubiquitin) linkage. Residues lysine 398 and lysine 400 each participate in a glycyl lysine isopeptide (Lys-Gly) (interchain with G-Cter in SUMO) cross-link. 3 positions are modified to phosphoserine: serine 425, serine 426, and serine 429. Serine 431 carries the phosphoserine; by TBK1 and IKKE modification. A phosphoserine mark is found at serine 437, serine 438, and serine 441.

The protein belongs to the IRF family. In terms of assembly, monomer. Homodimer; phosphorylation-induced. Heterodimer with IRF3. Interacts with TICAM1 and TICAM2. Interacts with MYD88 and TRAF6. Interacts with NMI; the interaction is direct and leads to the inhibition of IRF7-mediated type I IFN production. Interacts with GBP4; preventing interaction between TRAF6 and IRF7, resulting in impaired TRAF6-mediated IRF7 ubiquitination. Interacts with TARBP2; this interaction prevents IRF7 phosphorylation and activation. In terms of processing, acetylation inhibits its DNA-binding ability and activity. Post-translationally, in response to a viral infection, phosphorylated by TBK1 and IKBKE1. Phosphorylation, and subsequent activation is inhibited by vaccinia virus protein E3. In TLR7- and TLR9-mediated signaling pathway, phosphorylated by IRAK1. TRAF6-mediated ubiquitination is required for IRF7 activation. TRIM35 mediates IRF7 'Lys-48'-linked polyubiquitination and subsequent proteasomal degradation. 'Lys-48'-linked polyubiquitination and subsequent proteasomal degradation is NMI-dependent in response to Sendai virus infection. Ubiquitinated by UBE3C, leading to its degradation. In terms of processing, sumoylated by TRIM28, which inhibits its transactivation activity. Post-translationally, 'Lys-63'-linked ubiquitination by NEURL3 promotes IRF7 activation.

Its subcellular location is the nucleus. The protein localises to the cytoplasm. With respect to regulation, in the absence of viral infection, maintained as a monomer in an autoinhibited state and phosphorylation disrupts this autoinhibition leading to the liberation of the DNA-binding and dimerization activities and its nuclear localization where it can activate type I IFN and ISG genes. Its function is as follows. Key transcriptional regulator of type I interferon (IFN)-dependent immune responses and plays a critical role in the innate immune response against DNA and RNA viruses. Regulates the transcription of type I IFN genes (IFN-alpha and IFN-beta) and IFN-stimulated genes (ISG) by binding to an interferon-stimulated response element (ISRE) in their promoters. Can efficiently activate both the IFN-beta (IFNB) and the IFN-alpha (IFNA) genes and mediate their induction via both the virus-activated, MyD88-independent pathway and the TLR-activated, MyD88-dependent pathway. Induces transcription of ubiquitin hydrolase USP25 mRNA in response to lipopolysaccharide (LPS) or viral infection in a type I IFN-dependent manner. Required during both the early and late phases of the IFN gene induction but is more critical for the late than for the early phase. Exists in an inactive form in the cytoplasm of uninfected cells and following viral infection, double-stranded RNA (dsRNA), or toll-like receptor (TLR) signaling, becomes phosphorylated by IKBKE and TBK1 kinases. This induces a conformational change, leading to its dimerization and nuclear localization where along with other coactivators it can activate transcription of the type I IFN and ISG genes. Can also play a role in regulating adaptive immune responses by inducing PSMB9/LMP2 expression, either directly or through induction of IRF1. Binds to the Q promoter (Qp) of EBV nuclear antigen 1 a (EBNA1) and may play a role in the regulation of EBV latency. Can activate distinct gene expression programs in macrophages and regulate the anti-tumor properties of primary macrophages. The protein is Interferon regulatory factor 7 (Irf7) of Mus musculus (Mouse).